A 438-amino-acid polypeptide reads, in one-letter code: tRNA(Ile)-lysidine synthase (438 aa).

Position 19 to 24 (19 to 24 (SGGIDS)) interacts with ATP.

The protein belongs to the tRNA(Ile)-lysidine synthase family.

The protein localises to the cytoplasm. The enzyme catalyses cytidine(34) in tRNA(Ile2) + L-lysine + ATP = lysidine(34) in tRNA(Ile2) + AMP + diphosphate + H(+). Ligates lysine onto the cytidine present at position 34 of the AUA codon-specific tRNA(Ile) that contains the anticodon CAU, in an ATP-dependent manner. Cytidine is converted to lysidine, thus changing the amino acid specificity of the tRNA from methionine to isoleucine. This Buchnera aphidicola subsp. Baizongia pistaciae (strain Bp) protein is tRNA(Ile)-lysidine synthase.